The primary structure comprises 131 residues: Large ribosomal subunit protein bL12 (131 aa).

This sequence belongs to the bacterial ribosomal protein bL12 family. Homodimer. Part of the ribosomal stalk of the 50S ribosomal subunit. Forms a multimeric L10(L12)X complex, where L10 forms an elongated spine to which 2 to 4 L12 dimers bind in a sequential fashion. Binds GTP-bound translation factors.

Functionally, forms part of the ribosomal stalk which helps the ribosome interact with GTP-bound translation factors. Is thus essential for accurate translation. This chain is Large ribosomal subunit protein bL12, found in Nocardioides sp. (strain ATCC BAA-499 / JS614).